A 452-amino-acid chain; its full sequence is Serine--tRNA ligase (452 aa).

Residue 251–253 participates in L-serine binding; it reads TSE. 282 to 284 contacts ATP; the sequence is RSE. Residue glutamate 305 participates in L-serine binding. Position 369 to 372 (369 to 372) interacts with ATP; sequence EISS. Position 404 (serine 404) interacts with L-serine.

It belongs to the class-II aminoacyl-tRNA synthetase family. Type-1 seryl-tRNA synthetase subfamily. In terms of assembly, homodimer. The tRNA molecule binds across the dimer.

It localises to the cytoplasm. The enzyme catalyses tRNA(Ser) + L-serine + ATP = L-seryl-tRNA(Ser) + AMP + diphosphate + H(+). It carries out the reaction tRNA(Sec) + L-serine + ATP = L-seryl-tRNA(Sec) + AMP + diphosphate + H(+). Its pathway is aminoacyl-tRNA biosynthesis; selenocysteinyl-tRNA(Sec) biosynthesis; L-seryl-tRNA(Sec) from L-serine and tRNA(Sec): step 1/1. Its function is as follows. Catalyzes the attachment of serine to tRNA(Ser). Is also able to aminoacylate tRNA(Sec) with serine, to form the misacylated tRNA L-seryl-tRNA(Sec), which will be further converted into selenocysteinyl-tRNA(Sec). The polypeptide is Serine--tRNA ligase (Albidiferax ferrireducens (strain ATCC BAA-621 / DSM 15236 / T118) (Rhodoferax ferrireducens)).